A 599-amino-acid polypeptide reads, in one-letter code: Estrogen receptor (599 aa).

Residues 1 to 188 (MTMTLHTKAS…IMESAKETRY (188 aa)) are modulating (transactivation AF-1); mediates interaction with MACROD1. A glycan (O-linked (GlcNAc) serine) is linked at Ser-10. Positions 35–47 (MERALGEVYVDNS) are required for interaction with NCOA1. Positions 35 to 178 (MERALGEVYV…LSSSNEKGNM (144 aa)) are interaction with DDX5; self-association. O-linked (GlcNAc) threonine glycosylation is present at Thr-50. Ser-108 and Ser-110 each carry phosphoserine; by CDK2. At Ser-122 the chain carries Phosphoserine. A disordered region spans residues 147 to 175 (DTGPPAFYRSNSDNRRQNGRERLSSSNEK). Residues 158–169 (SDNRRQNGRERL) show a composition bias toward basic and acidic residues. At Ser-171 the chain carries Phosphoserine; by CK2. 2 NR C4-type zinc fingers span residues 189 to 209 (CAVC…CEGC) and 225 to 249 (CPAT…LRKC). The nuclear receptor DNA-binding region spans 189–254 (CAVCNDYASG…RLRKCYEVGM (66 aa)). Positions 189 to 314 (CAVCNDYASG…TKKNSPALSL (126 aa)) are mediates interaction with DNTTIP2. The segment at 255-314 (MKGGIRKDRRGGRMLKHKRQRDDLEGRNEMGASGDMRAANLWPSPLVIKHTKKNSPALSL) is hinge. Position 264 is an asymmetric dimethylarginine; by PRMT1 (Arg-264). Positions 266 to 599 (GRMLKHKRQR…PEAEGFPNTI (334 aa)) are interaction with AKAP13. The tract at residues 268-599 (MLKHKRQRDD…PEAEGFPNTI (332 aa)) is self-association. Residues 315-551 (TADQMVSALL…DLLLEMLDAH (237 aa)) form the NR LBD domain. A transactivation AF-2 region spans residues 315–599 (TADQMVSALL…PEAEGFPNTI (285 aa)). The 17beta-estradiol site is built by Glu-357 and Arg-398. The S-palmitoyl cysteine moiety is linked to residue Cys-451. Residue His-528 coordinates 17beta-estradiol. A Phosphotyrosine; by Tyr-kinases modification is found at Tyr-541. A disordered region spans residues 557–581 (ASRMGVPPEEPSQTQLATTSSTSAH). Residues 568–581 (SQTQLATTSSTSAH) show a composition bias toward low complexity. A glycan (O-linked (GlcNAc) threonine) is linked at Thr-575.

It belongs to the nuclear hormone receptor family. NR3 subfamily. Interacts with BCAS3. Binds DNA as a homodimer. Can form a heterodimer with ESR2. Interacts with coactivator NCOA5. Interacts with PELP1, the interaction is enhanced by 17-beta-estradiol; the interaction increases ESR1 transcriptional activity. Interacts with NCOA7; the interaction is ligand-inducible. Interacts with AKAP13, CUEDC2, HEXIM1, KDM5A, MAP1S, SMARD1, and UBE1C. Interacts with MUC1; the interaction is stimulated by 7 beta-estradiol (E2) and enhances ESR1-mediated transcription. Interacts with DNTTIP2, and UIMC1. Interacts with KMT2D/MLL2. Interacts with ATAD2; the interaction is enhanced by estradiol. Interacts with KIF18A and LDB1. Interacts with RLIM (via its C-terminus). Interacts with MACROD1. Interacts with SH2D4A and PLCG. Interacts with SH2D4A; the interaction blocks binding to PLCG and inhibits estrogen-induced cell proliferation. Interacts with DYNLL1. Interacts with CCDC62; the interaction requires estradiol and appears to enhance the transcription of target genes. Interacts with NR2C1; the interaction prevents homodimerization of ESR1 and suppresses its transcriptional activity and cell growth. Interacts with DNAAF4. Interacts with PRMT2. Interacts with RBFOX2. Interacts with EP300; the interaction is estrogen-dependent and enhanced by CITED1. Interacts with CITED1; the interaction is estrogen-dependent. Interacts with FAM120B, FOXL2, PHB2 and SLC30A9. Interacts with coactivators NCOA3 and NCOA6. Interacts with STK3/MST2 only in the presence of SAV1 and vice-versa. Binds to CSNK1D. Interacts with NCOA2; NCOA2 can interact with ESR1 AF-1 and AF-2 domains simultaneously and mediate their transcriptional synergy. Interacts with DDX5. Interacts with NCOA1; the interaction seems to require a self-association of N-terminal and C-terminal regions. Interacts with ZNF366, DDX17, NFKB1, RELA, SP1 and SP3. Interacts with NRIP1. Interacts with GPER1; the interaction occurs in an estrogen-dependent manner. Interacts with CLOCK and the interaction is stimulated by estrogen. Interacts with BCAS3. Interacts with TRIP4 (ufmylated); estrogen dependent. Interacts with LMTK3; the interaction phosphorylates ESR1 (in vitro) and protects it against proteasomal degradation. Interacts with CCAR2 (via N-terminus) in a ligand-independent manner. Interacts with ZFHX3. Interacts with SFR1 in a ligand-dependent and -independent manner. Interacts with DCAF13, LATS1 and DCAF1; regulates ESR1 ubiquitination and ubiquitin-mediated proteasomal degradation. Interacts (via DNA-binding domain) with POU4F2 isoform 2 (C-terminus); this interaction increases the estrogen receptor ESR1 transcriptional activity in a DNA- and ligand 17-beta-estradiol-independent manner. Interacts with ESRRB isoform 1. Interacts with UBE3A and WBP2. Interacts with GTF2B. Interacts with RBM39. In the absence of hormonal ligand, interacts with TACC1. Interacts with PI3KR1 or PI3KR2 and PTK2/FAK1. Interacts with SRC. Interacts with BAG1; the interaction is promoted in the absence of estradiol (17-beta-estradiol/E2). Interacts with and ubiquitinated by STUB1; the interaction is promoted in the absence of estradiol (17-beta-estradiol/E2). Interacts with NEDD8. In terms of processing, phosphorylated by cyclin A/CDK2 and CK1. Phosphorylation probably enhances transcriptional activity. Dephosphorylation at Ser-122 by PPP5C inhibits its transactivation activity. Phosphorylated by LMTK3 (in vitro). Post-translationally, ubiquitinated. Deubiquitinated by OTUB1. Palmitoylated at Cys-451 by ZDHHC7 and ZDHHC21. This modification is required for plasma membrane targeting and for rapid intracellular signaling via ERK and AKT kinases and cAMP generation, but not for signaling mediated by the nuclear hormone receptor. In terms of processing, ubiquitinated; regulated by LATS1 via DCAF1 it leads to ESR1 proteasomal degradation. Deubiquitinated by OTUB1. Ubiquitinated by STUB1/CHIP; in the CA1 hippocampal region following loss of endogenous circulating estradiol (17-beta-estradiol/E2). Ubiquitinated by UBR5, leading to its degradation: UBR5 specifically recognizes and binds ligand-bound ESR1 when it is not associated with coactivators (NCOAs). In presence of NCOAs, the UBR5-degron is not accessible, preventing its ubiquitination and degradation. Post-translationally, dimethylated by PRMT1 at Arg-264. The methylation may favor cytoplasmic localization. Demethylated by JMJD6 at Arg-264.

Its subcellular location is the nucleus. It is found in the cytoplasm. The protein resides in the golgi apparatus. It localises to the cell membrane. In terms of biological role, nuclear hormone receptor. The steroid hormones and their receptors are involved in the regulation of eukaryotic gene expression and affect cellular proliferation and differentiation in target tissues. Ligand-dependent nuclear transactivation involves either direct homodimer binding to a palindromic estrogen response element (ERE) sequence or association with other DNA-binding transcription factors, such as AP-1/c-Jun, c-Fos, ATF-2, Sp1 and Sp3, to mediate ERE-independent signaling. Ligand binding induces a conformational change allowing subsequent or combinatorial association with multiprotein coactivator complexes through LXXLL motifs of their respective components. Mutual transrepression occurs between the estrogen receptor (ER) and NF-kappa-B in a cell-type specific manner. Decreases NF-kappa-B DNA-binding activity and inhibits NF-kappa-B-mediated transcription from the IL6 promoter and displace RELA/p65 and associated coregulators from the promoter. Recruited to the NF-kappa-B response element of the CCL2 and IL8 promoters and can displace CREBBP. Present with NF-kappa-B components RELA/p65 and NFKB1/p50 on ERE sequences. Can also act synergistically with NF-kappa-B to activate transcription involving respective recruitment adjacent response elements; the function involves CREBBP. Can activate the transcriptional activity of TFF1. Also mediates membrane-initiated estrogen signaling involving various kinase cascades. Essential for MTA1-mediated transcriptional regulation of BRCA1 and BCAS3. Maintains neuronal survival in response to ischemic reperfusion injury when in the presence of circulating estradiol (17-beta-estradiol/E2). In Mus musculus (Mouse), this protein is Estrogen receptor (Esr1).